The primary structure comprises 631 residues: Dolichyl-diphosphooligosaccharide--protein glycosyltransferase subunit 2 (631 aa).

The N-terminal stretch at 1–22 (MASPGASTVFLLALTILAGTQA) is a signal peptide. The Lumenal segment spans residues 23–540 (LTPTHYLTKP…REPEKRPPTV (518 aa)). Residue Asn106 is glycosylated (N-linked (GlcNAc...) asparagine). Lys154 participates in a covalent cross-link: Glycyl lysine isopeptide (Lys-Gly) (interchain with G-Cter in ubiquitin). Residues 541-561 (VSNTFTALILSPLLLLFALWI) form a helical membrane-spanning segment. At 562–571 (RIGANVSNFT) the chain is on the cytoplasmic side. The helical transmembrane segment at 572–592 (FAPSTIIFHLGHAAMLGLMYV) threads the bilayer. The Lumenal portion of the chain corresponds to 593-596 (YWTQ). Residues 597 to 617 (LNMFQTLKYLAILGSVTFLAG) form a helical membrane-spanning segment. The Cytoplasmic segment spans residues 618–631 (NRMLAQQAIKRTAH).

It belongs to the SWP1 family. As to quaternary structure, component of the oligosaccharyltransferase (OST) complex. OST exists in two different complex forms which contain common core subunits RPN1, RPN2, OST48, OST4, DAD1 and TMEM258, either STT3A or STT3B as catalytic subunits, and form-specific accessory subunits. STT3A complex assembly occurs through the formation of 3 subcomplexes. Subcomplex 1 contains RPN1 and TMEM258, subcomplex 2 contains the STT3A-specific subunits STT3A, DC2/OSTC, and KCP2 as well as the core subunit OST4, and subcomplex 3 contains RPN2, DAD1, and OST48. The STT3A complex can form stable complexes with the Sec61 complex or with both the Sec61 and TRAP complexes. Interacts with DDI2. Interacts with TMEM35A/NACHO.

It localises to the endoplasmic reticulum. The protein localises to the endoplasmic reticulum membrane. It participates in protein modification; protein glycosylation. Functionally, subunit of the oligosaccharyl transferase (OST) complex that catalyzes the initial transfer of a defined glycan (Glc(3)Man(9)GlcNAc(2) in eukaryotes) from the lipid carrier dolichol-pyrophosphate to an asparagine residue within an Asn-X-Ser/Thr consensus motif in nascent polypeptide chains, the first step in protein N-glycosylation. N-glycosylation occurs cotranslationally and the complex associates with the Sec61 complex at the channel-forming translocon complex that mediates protein translocation across the endoplasmic reticulum (ER). All subunits are required for a maximal enzyme activity. The chain is Dolichyl-diphosphooligosaccharide--protein glycosyltransferase subunit 2 from Canis lupus familiaris (Dog).